A 215-amino-acid chain; its full sequence is Probable nicotinate-nucleotide adenylyltransferase (215 aa).

Belongs to the NadD family.

It catalyses the reaction nicotinate beta-D-ribonucleotide + ATP + H(+) = deamido-NAD(+) + diphosphate. It participates in cofactor biosynthesis; NAD(+) biosynthesis; deamido-NAD(+) from nicotinate D-ribonucleotide: step 1/1. Functionally, catalyzes the reversible adenylation of nicotinate mononucleotide (NaMN) to nicotinic acid adenine dinucleotide (NaAD). The protein is Probable nicotinate-nucleotide adenylyltransferase of Fervidobacterium nodosum (strain ATCC 35602 / DSM 5306 / Rt17-B1).